Reading from the N-terminus, the 1190-residue chain is DNA-directed RNA polymerase subunit beta (1190 aa).

A disordered region spans residues 1155–1190; that stretch reads ENFDDDDDHAPDAIMVDVKPAEREEAGEEKDAVTKE. Positions 1173–1190 are enriched in basic and acidic residues; that stretch reads KPAEREEAGEEKDAVTKE.

Belongs to the RNA polymerase beta chain family. In terms of assembly, the RNAP catalytic core consists of 2 alpha, 1 beta, 1 beta' and 1 omega subunit. When a sigma factor is associated with the core the holoenzyme is formed, which can initiate transcription.

The catalysed reaction is RNA(n) + a ribonucleoside 5'-triphosphate = RNA(n+1) + diphosphate. DNA-dependent RNA polymerase catalyzes the transcription of DNA into RNA using the four ribonucleoside triphosphates as substrates. The sequence is that of DNA-directed RNA polymerase subunit beta from Geobacillus kaustophilus (strain HTA426).